Here is an 88-residue protein sequence, read N- to C-terminus: MDKIKYRPIGMKAIRLLERRQYTFDVDVKATKTEVKRWIEGFFSVKVVGMNSHRPPKKKKRMGSVIGYPVRYKRMIVTLKVGDSIPLS.

The protein belongs to the universal ribosomal protein uL23 family. Part of the 50S ribosomal subunit.

It is found in the plastid. Its subcellular location is the chloroplast. In terms of biological role, binds to 23S rRNA. In Spirogyra maxima (Green alga), this protein is Large ribosomal subunit protein uL23c (rpl23).